The primary structure comprises 85 residues: Large ribosomal subunit protein bL27 (85 aa).

The protein belongs to the bacterial ribosomal protein bL27 family.

The chain is Large ribosomal subunit protein bL27 from Campylobacter hominis (strain ATCC BAA-381 / DSM 21671 / CCUG 45161 / LMG 19568 / NCTC 13146 / CH001A).